A 358-amino-acid polypeptide reads, in one-letter code: Uptake hydrogenase small subunit (358 aa).

The tat-type signal signal peptide spans 1-45 (MSRLETFYDVMRRQGITRRSFLKYCSLTAAALGLGPAFAPRIAHA). Residues cysteine 62, cysteine 65, cysteine 160, cysteine 194, histidine 232, cysteine 235, cysteine 260, and cysteine 266 each coordinate [4Fe-4S] cluster. [3Fe-4S] cluster-binding residues include cysteine 275, cysteine 294, and cysteine 297.

This sequence belongs to the [NiFe]/[NiFeSe] hydrogenase small subunit family. As to quaternary structure, heterodimer of a large and a small subunit. [4Fe-4S] cluster serves as cofactor. [3Fe-4S] cluster is required as a cofactor. Post-translationally, predicted to be exported by the Tat system. The position of the signal peptide cleavage has been experimentally proven.

The protein localises to the cell membrane. It carries out the reaction H2 + A = AH2. Functionally, this enzyme recycles the H(2) produced by nitrogenase to increase the production of ATP and to protect nitrogenase against inhibition or damage by O(2) under carbon- or phosphate-limited conditions. The polypeptide is Uptake hydrogenase small subunit (hoxK) (Azotobacter vinelandii).